Reading from the N-terminus, the 92-residue chain is MVVTTSDVVMCQMRRSDVQGGYRVYGSWMAENVQDQVSILNQKLSEFAPSMPHAVRSDVINNRLQNLHLHAHHFLIRRHQLITHLNPHLHRN.

Belongs to the 'phage' integrase family.

In Escherichia coli (strain K12), this protein is Putative protein IntG (intG).